The chain runs to 560 residues: Nuclear receptor subfamily 5 group A member 2 (560 aa).

The segment at Gly-17–Ile-54 is disordered. Over residues His-31–Asp-48 the composition is skewed to basic and acidic residues. Residues Glu-104–Ala-179 constitute a DNA-binding region (nuclear receptor). Zn(2+) is bound by residues Cys-107, Cys-110, Cys-124, Cys-127, Cys-143, Cys-149, Cys-159, and Cys-162. 2 consecutive NR C4-type zinc fingers follow at residues Cys-107–Cys-127 and Cys-143–Cys-162. A C-terminal extension (CTE) region spans residues Lys-173–Lys-188. Positions Phe-189–Arg-208 match the FTZ-F1 box motif. Lys-289 participates in a covalent cross-link: Glycyl lysine isopeptide (Lys-Gly) (interchain with G-Cter in SUMO1). The NR LBD domain maps to Ser-319–Lys-558. 2 residues coordinate a phospholipid derivative: Tyr-535 and Lys-539. Positions Tyr-547–Lys-558 are AF-2.

The protein belongs to the nuclear hormone receptor family. NR5 subfamily. In terms of assembly, monomer; Binds DNA as a monomer. Interacts with nuclear receptor corepressors NR0B1 and NR0B2; repressing NR5A2 nuclear receptor activity. Interacts with nuclear receptor coactivators CTNNB1, PPARGC1A and NCOA2; interaction takes place following ligand-binding and promotes target gene activation. Interacts (when sumoylated) with GPS2; interaction with GPS2 onto hepatic acute phase protein promoters prevents N-Cor corepressor complex dissociation. Interacts with HNF1A. Interacts with GRIP1. Sumoylated by SUMO1 at Lys-289 during the hepatic acute phase response, leading to promote interaction with GPS2 and prevent N-Cor corepressor complex dissociation.

Its subcellular location is the nucleus. It is found in the chromosome. Its function is as follows. Orphan nuclear receptor that binds DNA as a monomer to the 5'-TCAAGGCCA-3' sequence and controls expression of target genes: regulates key biological processes, such as early embryonic development, cholesterol and bile acid synthesis pathways, as well as liver and pancreas morphogenesis. Ligand-binding causes conformational change which causes recruitment of coactivators, promoting target gene activation. The specific ligand is unknown, but specific phospholipids, such as phosphatidylethanolamine, phosphatidylserine, dilauroyl phosphatidylcholine and diundecanoyl phosphatidylcholine can act as ligand in vitro. Acts as a pioneer transcription factor, which unwraps target DNA from histones and elicits local opening of closed chromatin. Plays a central role during preimplantation stages of embryonic development. Plays a minor role in zygotic genome activation (ZGA) by regulating a small set of two-cell stage genes. Plays a major role in morula development (2-16 cells embryos) by acting as a master regulator at the 8-cell stage, controlling expression of lineage-specifying transcription factors and genes involved in mitosis, telomere maintenance and DNA repair. Zygotic NR5A2 binds to both closed and open chromatin with other transcription factors, often at SINE B1/Alu repeats DNA elements, promoting chromatin accessibility at nearby regulatory regions. Also involved in the epiblast stage of development and embryonic stem cell pluripotency, by promoting expression of POU5F1/OCT4. Regulates other processes later in development, such as formation of connective tissue in lower jaw and middle ear, neural stem cell differentiation, ovarian follicle development and Sertoli cell differentiation. Involved in exocrine pancreas development and acinar cell differentiation. Acts as an essential transcriptional regulator of lipid metabolism. Key regulator of cholesterol 7-alpha-hydroxylase gene (CYP7A) expression in liver. Also acts as a negative regulator of inflammation in different organs, such as, liver and pancreas. Protects against intestinal inflammation via its ability to regulate glucocorticoid production. Plays an anti-inflammatory role during the hepatic acute phase response by acting as a corepressor: inhibits the hepatic acute phase response by preventing dissociation of the N-Cor corepressor complex. Acts as a regulator of immunity by promoting lymphocyte T-cell development, proliferation and effector functions. Also involved in resolution of endoplasmic reticulum stress in the liver. In Rattus norvegicus (Rat), this protein is Nuclear receptor subfamily 5 group A member 2.